The primary structure comprises 249 residues: Short-chain dehydrogenase virB (249 aa).

Residues isoleucine 16, arginine 104, tyrosine 150, lysine 154, valine 183, and threonine 185 each coordinate NADP(+). Tyrosine 150 functions as the Proton donor in the catalytic mechanism. Lysine 154 (lowers pKa of active site Tyr) is an active-site residue.

The protein belongs to the short-chain dehydrogenases/reductases (SDR) family.

It functions in the pathway secondary metabolite biosynthesis. Functionally, short-chain dehydrogenase; part of the gene cluster that mediates the biosynthesis of virensols and trichoxide, fungal natural products that contain or are derived from a salicylaldehyde core. The pathway begins with the synthesis of the reduced chain in virensol C by the highly reducing polyketide synthase virA via condensation of one acetate and 8 malonate units. VirA has interesting programming rules since the first 2 ketides are fully reduced, the 3 following ketides undergo beta-dehydration, and the last 3 ketides are only reduced to beta-hydroxys to yield the trihydroxy portion. The production of aldehyde virensol C by virA alone is surprising, since virA does not contain a reductase (R) domain that is typically associated with reductive product release in HRPKS. The cupin-domain enzyme virC is involved in enhancing virA product turnover. The short-chain dehydrogenase virB then oxidizes the C-7 alcohol of virensol C to a ketone, yielding virensol D. Virensol D is further transformed to salicylaldehyde 5-deoxyaurocitrin by the short-chain dehydrogenase virD. VirD catalyzes the dehydrogenation of C-3 to form the beta-ketone aldehyde, which is followed by the generation of the nucleophilic C-2 that is required for the intramolecular aldol condensation between C-2 and C-7, itself followed by dehydration and aromatization which leads to salicylaldehyde 5-deoxyaurocitrin. While the dehydrogenation of virensol D is definitely catalyzed by virD, the aldol condensation and dehydration may be uncatalyzed or assisted by virD. The short chain dehydrogenase virG then converts salicylaldehyde 5-deoxyaurocitrin into virensol B which is further hydroxylated by the cytochrome P450 monooxygenase virE to yield the hydroquinone virensol A. VirI then may oxidize virensol A to form the quinone, while virH performs the epoxidation. Finally, the two remaining short-chain dehydrogenases, virK and virL, are probably responsible for reducing the ketones to the corresponding alcohols to furnish the epoxycyclohexanol structure in trichoxide. This Hypocrea virens (strain Gv29-8 / FGSC 10586) (Gliocladium virens) protein is Short-chain dehydrogenase virB.